Here is a 141-residue protein sequence, read N- to C-terminus: Flagellar assembly factor FliW (141 aa).

This sequence belongs to the FliW family. Interacts with translational regulator CsrA and flagellin(s).

It is found in the cytoplasm. Functionally, acts as an anti-CsrA protein, binds CsrA and prevents it from repressing translation of its target genes, one of which is flagellin. Binds to flagellin and participates in the assembly of the flagellum. This Clostridium botulinum (strain Alaska E43 / Type E3) protein is Flagellar assembly factor FliW.